The following is a 414-amino-acid chain: Lipoyl synthase, mitochondrial (414 aa).

A mitochondrion-targeting transit peptide spans 1-18 (MYRRSVGVLFVGRNTRWI). Polar residues predominate over residues 51 to 67 (GNSTEVENATSQLTGTS). Residues 51-75 (GNSTEVENATSQLTGTSGKRRKGNR) are disordered. C150, C155, C161, C181, C185, C188, and S396 together coordinate [4Fe-4S] cluster. Residues 164-385 (GKDKSKATAT…KERALEMGFL (222 aa)) enclose the Radical SAM core domain.

It belongs to the radical SAM superfamily. Lipoyl synthase family. [4Fe-4S] cluster is required as a cofactor.

Its subcellular location is the mitochondrion. The enzyme catalyses [[Fe-S] cluster scaffold protein carrying a second [4Fe-4S](2+) cluster] + N(6)-octanoyl-L-lysyl-[protein] + 2 oxidized [2Fe-2S]-[ferredoxin] + 2 S-adenosyl-L-methionine + 4 H(+) = [[Fe-S] cluster scaffold protein] + N(6)-[(R)-dihydrolipoyl]-L-lysyl-[protein] + 4 Fe(3+) + 2 hydrogen sulfide + 2 5'-deoxyadenosine + 2 L-methionine + 2 reduced [2Fe-2S]-[ferredoxin]. It functions in the pathway protein modification; protein lipoylation via endogenous pathway; protein N(6)-(lipoyl)lysine from octanoyl-[acyl-carrier-protein]: step 2/2. Functionally, catalyzes the radical-mediated insertion of two sulfur atoms into the C-6 and C-8 positions of the octanoyl moiety bound to the lipoyl domains of lipoate-dependent enzymes, thereby converting the octanoylated domains into lipoylated derivatives. This is Lipoyl synthase, mitochondrial from Saccharomyces cerevisiae (strain RM11-1a) (Baker's yeast).